We begin with the raw amino-acid sequence, 108 residues long: Nucleoid-associated protein Bmul_1447/BMULJ_01796 (108 aa).

Positions 84 to 108 are disordered; the sequence is EATSQEKMSGMTSGLPLPPGFKLPF. Positions 85 to 95 are enriched in polar residues; the sequence is ATSQEKMSGMT. Residues 99–108 show a composition bias toward pro residues; the sequence is PLPPGFKLPF.

This sequence belongs to the YbaB/EbfC family. Homodimer.

It is found in the cytoplasm. The protein resides in the nucleoid. Functionally, binds to DNA and alters its conformation. May be involved in regulation of gene expression, nucleoid organization and DNA protection. The polypeptide is Nucleoid-associated protein Bmul_1447/BMULJ_01796 (Burkholderia multivorans (strain ATCC 17616 / 249)).